The primary structure comprises 156 residues: MKARLIATGERAPSWVAQGFAEYQKRLSHWLPFELVEIEPGLRGKGRDARRATEDEGRRVIAALPKNAYVVALDVPGRQLSSEQLAQRLEHWRGQGRDLAFLIGGPEGHSPEVSALADEKWSIGPLTLPHMLVRLVVAEQLYRAAAMIANHPYHRA.

S-adenosyl-L-methionine contacts are provided by residues Leu73, Gly104, and 123-128; that span reads IGPLTL.

This sequence belongs to the RNA methyltransferase RlmH family. In terms of assembly, homodimer.

The protein resides in the cytoplasm. The enzyme catalyses pseudouridine(1915) in 23S rRNA + S-adenosyl-L-methionine = N(3)-methylpseudouridine(1915) in 23S rRNA + S-adenosyl-L-homocysteine + H(+). In terms of biological role, specifically methylates the pseudouridine at position 1915 (m3Psi1915) in 23S rRNA. This is Ribosomal RNA large subunit methyltransferase H from Stenotrophomonas maltophilia (strain K279a).